Here is a 104-residue protein sequence, read N- to C-terminus: Large ribosomal subunit protein bL21 (104 aa).

This sequence belongs to the bacterial ribosomal protein bL21 family. Part of the 50S ribosomal subunit. Contacts protein L20.

This protein binds to 23S rRNA in the presence of protein L20. This chain is Large ribosomal subunit protein bL21, found in Thermodesulfovibrio yellowstonii (strain ATCC 51303 / DSM 11347 / YP87).